A 140-amino-acid chain; its full sequence is Nucleoside diphosphate kinase (140 aa).

ATP-binding residues include Lys-11, Phe-59, Arg-87, Thr-93, Arg-104, and Asn-114. Residue His-117 is the Pros-phosphohistidine intermediate of the active site.

The protein belongs to the NDK family. In terms of assembly, homotetramer. Requires Mg(2+) as cofactor.

It localises to the cytoplasm. The enzyme catalyses a 2'-deoxyribonucleoside 5'-diphosphate + ATP = a 2'-deoxyribonucleoside 5'-triphosphate + ADP. It carries out the reaction a ribonucleoside 5'-diphosphate + ATP = a ribonucleoside 5'-triphosphate + ADP. Functionally, major role in the synthesis of nucleoside triphosphates other than ATP. The ATP gamma phosphate is transferred to the NDP beta phosphate via a ping-pong mechanism, using a phosphorylated active-site intermediate. The chain is Nucleoside diphosphate kinase from Rhodopseudomonas palustris (strain BisA53).